A 329-amino-acid polypeptide reads, in one-letter code: Putative L-ascorbate peroxidase 6 (329 aa).

The active-site Proton acceptor is the H123. A heme b-binding site is contributed by H244.

It belongs to the peroxidase family. Ascorbate peroxidase subfamily. The cofactor is heme b.

The enzyme catalyses L-ascorbate + H2O2 = L-dehydroascorbate + 2 H2O. Plays a key role in hydrogen peroxide removal. The chain is Putative L-ascorbate peroxidase 6 (APX6) from Arabidopsis thaliana (Mouse-ear cress).